A 38-amino-acid chain; its full sequence is Toxin BmK NSPK (38 aa).

3 disulfide bridges follow: Cys-7-Cys-27, Cys-13-Cys-32, and Cys-17-Cys-34.

In terms of tissue distribution, expressed by the venom gland.

It is found in the secreted. In terms of biological role, blocks voltage-gated potassium (Kv) channel and augments neurite extension via NGF/TrkA signaling pathway. The polypeptide is Toxin BmK NSPK (Olivierus martensii (Manchurian scorpion)).